The primary structure comprises 69 residues: Light-harvesting protein B-1015 alpha chain (69 aa).

Residues 2–20 are Cytoplasmic-facing; the sequence is ATEYRTASWKLWLILDPRR. Residues 21–41 traverse the membrane as a helical segment; it reads VLTALFVYLTVIALLIHFGLL. Position 37 (His37) interacts with a bacteriochlorophyll. Residues 42 to 59 are Periplasmic-facing; sequence STDRLNWWEFQRGLPKAA. A propeptide spanning residues 60-69 is cleaved from the precursor; sequence SLVVVPPAVG.

It belongs to the antenna complex alpha subunit family. The core complex is formed by different alpha and beta chains, binding bacteriochlorophyll molecules, and arranged most probably in tetrameric structures disposed around the reaction center. The non-pigmented gamma chains may constitute additional components.

It is found in the cell inner membrane. Functionally, antenna complexes are light-harvesting systems, which transfer the excitation energy to the reaction centers. In Blastochloris viridis (Rhodopseudomonas viridis), this protein is Light-harvesting protein B-1015 alpha chain (pufA).